The following is a 41-amino-acid chain: ORF3c protein (41 aa).

In terms of biological role, may play a role in host modulation. In Severe acute respiratory syndrome coronavirus 2 (2019-nCoV), this protein is ORF3c protein.